The sequence spans 521 residues: Glucose-6-phosphate isomerase (521 aa).

The Proton donor role is filled by Glu-327. Residues His-358 and Lys-486 contribute to the active site.

The protein belongs to the GPI family.

It localises to the cytoplasm. It carries out the reaction alpha-D-glucose 6-phosphate = beta-D-fructose 6-phosphate. It functions in the pathway carbohydrate biosynthesis; gluconeogenesis. The protein operates within carbohydrate degradation; glycolysis; D-glyceraldehyde 3-phosphate and glycerone phosphate from D-glucose: step 2/4. In terms of biological role, catalyzes the reversible isomerization of glucose-6-phosphate to fructose-6-phosphate. This chain is Glucose-6-phosphate isomerase, found in Bordetella bronchiseptica (strain ATCC BAA-588 / NCTC 13252 / RB50) (Alcaligenes bronchisepticus).